Here is a 75-residue protein sequence, read N- to C-terminus: MSETVVVRVKPGSRKGPLVETADDGTLTIYVQERAVDGKANAAVTKLLAAHLGVPPSRVELASGATARLKRFRIS.

This sequence belongs to the UPF0235 family.

In Mycolicibacterium smegmatis (strain ATCC 700084 / mc(2)155) (Mycobacterium smegmatis), this protein is UPF0235 protein MSMEG_3845.